The primary structure comprises 136 residues: ATP synthase epsilon chain (136 aa).

Belongs to the ATPase epsilon chain family. F-type ATPases have 2 components, CF(1) - the catalytic core - and CF(0) - the membrane proton channel. CF(1) has five subunits: alpha(3), beta(3), gamma(1), delta(1), epsilon(1). CF(0) has three main subunits: a, b and c.

It is found in the cellular thylakoid membrane. Produces ATP from ADP in the presence of a proton gradient across the membrane. In Parasynechococcus marenigrum (strain WH8102), this protein is ATP synthase epsilon chain.